The following is a 268-amino-acid chain: tRNA (guanine-N(7)-)-methyltransferase (268 aa).

The tract at residues 1-21 (MMAGAEAPQPQKRYYRQRAHS) is disordered. A Phosphoserine modification is found at serine 21. S-adenosyl-L-methionine contacts are provided by glycine 78, glutamate 101, arginine 103, asparagine 134, alanine 135, and leucine 154. Residue aspartate 157 is part of the active site. Residues 158–166 (PHFKRTKHK) are alphaC helix. Positions 232 and 234 each coordinate S-adenosyl-L-methionine. The tract at residues 232–240 (TEEGKKVLR) is alpha6 helix.

Belongs to the class I-like SAM-binding methyltransferase superfamily. TrmB family. As to quaternary structure, catalytic component of the METTL1-WDR4 complex, composed of METTL1 and WDR4. In terms of processing, phosphorylation at Ser-21 by PKB/AKT1 inactivates its methyltransferase activity via a steric interference mechanism in the active site that locally disrupts the catalytic center. Phosphorylation at Ser-21 does not affect the interaction with WDR4.

The protein resides in the nucleus. It catalyses the reaction guanosine(46) in tRNA + S-adenosyl-L-methionine = N(7)-methylguanosine(46) in tRNA + S-adenosyl-L-homocysteine. The enzyme catalyses a guanosine in mRNA + S-adenosyl-L-methionine = an N(7)-methylguanosine in mRNA + S-adenosyl-L-homocysteine. It carries out the reaction a guanosine in miRNA + S-adenosyl-L-methionine = an N(7)-methylguanosine in miRNA + S-adenosyl-L-homocysteine. It functions in the pathway tRNA modification; N(7)-methylguanine-tRNA biosynthesis. Catalytic component of METTL1-WDR4 methyltransferase complex that mediates the formation of N(7)-methylguanine in a subset of RNA species, such as tRNAs, mRNAs and microRNAs (miRNAs). Catalyzes the formation of N(7)-methylguanine at position 46 (m7G46) in a large subset of tRNAs that contain the 5'-RAGGU-3' motif within the variable loop. M7G46 interacts with C13-G22 in the D-loop to stabilize tRNA tertiary structure and protect tRNAs from decay. Also acts as a methyltransferase for a subset of internal N(7)-methylguanine in mRNAs. Internal N(7)-methylguanine methylation of mRNAs in response to stress promotes their relocalization to stress granules, thereby suppressing their translation. Also methylates a specific subset of miRNAs, such as let-7. N(7)-methylguanine methylation of let-7 miRNA promotes let-7 miRNA processing by disrupting an inhibitory secondary structure within the primary miRNA transcript (pri-miRNA). Acts as a regulator of embryonic stem cell self-renewal and differentiation. This Mus musculus (Mouse) protein is tRNA (guanine-N(7)-)-methyltransferase.